The primary structure comprises 681 residues: Long-chain-fatty-acid--CoA ligase heimdall (681 aa).

Residues 223-231 (TSGTVGMPK), 414-419 (ECYGMS), Asp491, Arg506, and Lys639 contribute to the ATP site.

This sequence belongs to the ATP-dependent AMP-binding enzyme family. Bubblegum subfamily.

It carries out the reaction a long-chain fatty acid + ATP + CoA = a long-chain fatty acyl-CoA + AMP + diphosphate. In terms of biological role, mediates activation of long-chain fatty acids for both synthesis of cellular lipids, and degradation via beta-oxidation. Probably by regulating lipid storage and catabolism, plays a role in neuronal function. In Drosophila melanogaster (Fruit fly), this protein is Long-chain-fatty-acid--CoA ligase heimdall.